An 864-amino-acid chain; its full sequence is A-kinase anchor protein 3 (864 aa).

Ser-12 carries the post-translational modification Phosphoserine; by STK33. Residues 125–138 (VSFYANRLTNLVIA) form a PKA-RII subunit binding domain region. 2 disordered regions span residues 190–235 (NISS…DKPG) and 251–281 (AGDAKEGGRSLPGDQKLFRTSPDNRPDDFSN). Over residues 204–218 (SGSSQAPGLRYTSTL) the composition is skewed to polar residues. Ser-206 carries the phosphoserine modification. Over residues 219-235 (KIKESTKEGKCPDDKPG) the composition is skewed to basic and acidic residues. At Ser-405 the chain carries Phosphoserine. A Phosphotyrosine modification is found at Tyr-406. The tract at residues 619-638 (VHEQNTQEEEIHPCERPKTP) is disordered. The span at 627-638 (EEIHPCERPKTP) shows a compositional bias: basic and acidic residues.

Belongs to the AKAP110 family. Interacts with ROPN1 and ROPN1L. Interacts with QRICH2. In terms of processing, phosphorylated by STK33 during sperm flagella assembly. Phosphorylated on tyrosine.

Its subcellular location is the cytoplasmic vesicle. It localises to the secretory vesicle. It is found in the acrosome. The protein localises to the cell projection. The protein resides in the cilium. Its subcellular location is the flagellum. Its function is as follows. Structural component of sperm fibrous sheath. Required for the formation of the subcellular structure of the sperm flagellum, sperm motility and male fertility. The sequence is that of A-kinase anchor protein 3 from Mus musculus (Mouse).